Reading from the N-terminus, the 335-residue chain is Pro-cathepsin H (335 aa).

The N-terminal stretch at 1-22 (MWAVLPLLCAGAWLLGAPACGA) is a signal peptide. A propeptide spans 23 to 97 (AELAANSLEK…DELKRKYLWS (75 aa)) (activation peptide). N-linked (GlcNAc...) asparagine glycans are attached at residues Asn-72 and Asn-101. 4 disulfide bridges follow: Cys-102–Cys-327, Cys-138–Cys-181, Cys-172–Cys-214, and Cys-272–Cys-322. A propeptide spanning residues 106–115 (KSNYLRGTGP) is cleaved from the precursor. Residue Cys-141 is part of the active site. N-linked (GlcNAc...) asparagine glycosylation occurs at Asn-230. Catalysis depends on residues His-281 and Asn-301.

The protein belongs to the peptidase C1 family. As to quaternary structure, composed of a mini chain and a large chain. The large chain may be split into heavy and light chain. All chains are held together by disulfide bonds.

Its subcellular location is the lysosome. It carries out the reaction Hydrolysis of proteins, acting as an aminopeptidase (notably, cleaving Arg-|-Xaa bonds) as well as an endopeptidase.. Functionally, important for the overall degradation of proteins in lysosomes. The polypeptide is Pro-cathepsin H (CTSH) (Bos taurus (Bovine)).